The chain runs to 354 residues: Uroporphyrinogen decarboxylase (354 aa).

Substrate-binding positions include 27–31 (RQAGR), phenylalanine 46, aspartate 77, tyrosine 154, threonine 209, and histidine 327.

This sequence belongs to the uroporphyrinogen decarboxylase family. In terms of assembly, homodimer.

Its subcellular location is the cytoplasm. The enzyme catalyses uroporphyrinogen III + 4 H(+) = coproporphyrinogen III + 4 CO2. It functions in the pathway porphyrin-containing compound metabolism; protoporphyrin-IX biosynthesis; coproporphyrinogen-III from 5-aminolevulinate: step 4/4. Its function is as follows. Catalyzes the decarboxylation of four acetate groups of uroporphyrinogen-III to yield coproporphyrinogen-III. The polypeptide is Uroporphyrinogen decarboxylase (Photorhabdus laumondii subsp. laumondii (strain DSM 15139 / CIP 105565 / TT01) (Photorhabdus luminescens subsp. laumondii)).